Here is a 336-residue protein sequence, read N- to C-terminus: Aspartate carbamoyltransferase catalytic subunit (336 aa).

2 residues coordinate carbamoyl phosphate: R71 and T72. K99 is a binding site for L-aspartate. Carbamoyl phosphate is bound by residues R121, H151, and Q154. L-aspartate is bound by residues R184 and R239. G280 and P281 together coordinate carbamoyl phosphate.

This sequence belongs to the aspartate/ornithine carbamoyltransferase superfamily. ATCase family. Heterododecamer (2C3:3R2) of six catalytic PyrB chains organized as two trimers (C3), and six regulatory PyrI chains organized as three dimers (R2).

It carries out the reaction carbamoyl phosphate + L-aspartate = N-carbamoyl-L-aspartate + phosphate + H(+). It functions in the pathway pyrimidine metabolism; UMP biosynthesis via de novo pathway; (S)-dihydroorotate from bicarbonate: step 2/3. In terms of biological role, catalyzes the condensation of carbamoyl phosphate and aspartate to form carbamoyl aspartate and inorganic phosphate, the committed step in the de novo pyrimidine nucleotide biosynthesis pathway. The chain is Aspartate carbamoyltransferase catalytic subunit from Azotobacter vinelandii (strain DJ / ATCC BAA-1303).